Here is a 171-residue protein sequence, read N- to C-terminus: Peptide deformylase (171 aa).

Positions 91 and 133 each coordinate Fe cation. Residue Glu134 is part of the active site. His137 is a Fe cation binding site.

The protein belongs to the polypeptide deformylase family. Requires Fe(2+) as cofactor.

It carries out the reaction N-terminal N-formyl-L-methionyl-[peptide] + H2O = N-terminal L-methionyl-[peptide] + formate. In terms of biological role, removes the formyl group from the N-terminal Met of newly synthesized proteins. Requires at least a dipeptide for an efficient rate of reaction. N-terminal L-methionine is a prerequisite for activity but the enzyme has broad specificity at other positions. The protein is Peptide deformylase of Cronobacter sakazakii (strain ATCC BAA-894) (Enterobacter sakazakii).